Reading from the N-terminus, the 557-residue chain is MANVIKTVLTYQLDGSNRDFNIPFEYLARKFVVVTLIGVDRKVLSINADYRFATRTTISLTKAWGPADGYTTIELRRVTSTTDQLVDFTDGSILRAYDLNVAQIQTMHVAEEARDLTADTIGVNNDGHLDARGRRIVNLANAVDDRDAVPFGQLKTMNQNSWQARNEALQFRNEAETFRNQTEVFKNESGTNATNTKQWRDEANGSRDEAEQFKNTAGQYATSAGNSATTATQSEVNAENSATDADNSRNLAEQHADRLELEADKLGIFNGLAGRIDKGDGTNVYWKGGIHANGRLYLTSDGFDCGQYQQFFGGSAGRYSVMEWGIEKAWLMHVERRERTTAIVDNIQLVVNGHIIAQGGDMTGPLKLQNGHALYLESASDKAQYILSKDGNRNNWHIGRGSDNNNDCTFHSYVYGTNLTLKPDYAVVNKRFHVGQAVVATDGNIQGTKWGRKWLDAYLNDTYVKKTMAWTQVWAAASDSYMGGGSQTDTLHRTCDSATYGLRPETTIGTSSELVLTVSTSFQPRRWLKFQIHSNGRVFKNIADRAATPTAIAVEDV.

Over residues 187–197 (NESGTNATNTK) the composition is skewed to polar residues. Residues 187-249 (NESGTNATNT…NSATDADNSR (63 aa)) form a disordered region. Basic and acidic residues predominate over residues 198–212 (QWRDEANGSRDEAEQ). A compositionally biased stretch (low complexity) spans 221 to 234 (ATSAGNSATTATQS). The span at 235–249 (EVNAENSATDADNSR) shows a compositional bias: polar residues.

It belongs to the T7likevirus tail fiber protein family. As to quaternary structure, homotrimerizes. Interacts with tail components gp11 and gp12.

The protein localises to the virion. Its function is as follows. Structural component of the short non-contractile tail. The tail comprises six fibers made of gp17 trimers, 2 nm in diameter and 32 nm in length. May attach to host lipopolysaccharides (LPS) to mediate primary attachment to the host cell. This is Tail fiber protein (17) from Escherichia coli (Bacteriophage T3).